The chain runs to 177 residues: MKLPKEGDFITIQSYKHDGSLHRTWRDTMVLKTTENAVIGVNDHTLVTESDGRRWVTREPAIVYFHKKFWFNIIAMIRDNGVSYYCNLASPYIMDQEALKYIDYDLDVKVFADGEKKLLDVDEYELHKQKMGYSSDIDYILKENVKILVDWINNGKGPFSQSYINIWYKRYLELKNR.

Residue R23 is the Proton donor of the active site. Residues N87, D103, D105, D107, D120, and E123 each contribute to the Mg(2+) site.

Belongs to the Ntdp family. The cofactor is Mg(2+).

The enzyme catalyses a ribonucleoside 5'-triphosphate + H2O = a ribonucleoside 5'-diphosphate + phosphate + H(+). It carries out the reaction a ribonucleoside 5'-diphosphate + H2O = a ribonucleoside 5'-phosphate + phosphate + H(+). Has nucleoside phosphatase activity towards nucleoside triphosphates and nucleoside diphosphates. In Streptococcus mutans serotype c (strain ATCC 700610 / UA159), this protein is Nucleoside triphosphate/diphosphate phosphatase.